A 330-amino-acid polypeptide reads, in one-letter code: tRNA U34 carboxymethyltransferase (330 aa).

Residues Lys98, Trp112, Lys117, Gly137, 187-188, Met203, Tyr207, and Arg322 each bind carboxy-S-adenosyl-L-methionine; that span reads ME. Residues 309–330 are disordered; sequence NPSKTIEGYPGPKRATLIAEKP.

It belongs to the class I-like SAM-binding methyltransferase superfamily. CmoB family. In terms of assembly, homotetramer.

The catalysed reaction is carboxy-S-adenosyl-L-methionine + 5-hydroxyuridine(34) in tRNA = 5-carboxymethoxyuridine(34) in tRNA + S-adenosyl-L-homocysteine + H(+). Functionally, catalyzes carboxymethyl transfer from carboxy-S-adenosyl-L-methionine (Cx-SAM) to 5-hydroxyuridine (ho5U) to form 5-carboxymethoxyuridine (cmo5U) at position 34 in tRNAs. This chain is tRNA U34 carboxymethyltransferase, found in Marinobacter nauticus (strain ATCC 700491 / DSM 11845 / VT8) (Marinobacter aquaeolei).